The sequence spans 52 residues: Creatine kinase B-type (52 aa).

The Phosphagen kinase C-terminal domain maps to 1-52; sequence AKVLTLDLYKKLRDKSTPSGFTLDDIIQNEHLGYVLTCPSNLGTXLRAXVHV. Residues 1 to 52 enclose the Phosphagen kinase N-terminal domain; it reads AKVLTLDLYKKLRDKSTPSGFTLDDIIQNEHLGYVLTCPSNLGTXLRAXVHV. ATP is bound by residues arginine 13 and arginine 47.

This sequence belongs to the ATP:guanido phosphotransferase family. Dimer of identical or non-identical chains, which can be either B (brain type) or M (muscle type). With MM being the major form in skeletal muscle and myocardium, MB existing in myocardium, and BB existing in many tissues, especially brain. As to expression, expressed in rectal gland, brain, skeletal muscle (at protein level).

It is found in the cytoplasm. It localises to the cytosol. The protein localises to the mitochondrion. The protein resides in the basal cell membrane. The catalysed reaction is creatine + ATP = N-phosphocreatine + ADP + H(+). In terms of biological role, reversibly catalyzes the transfer of phosphate between ATP and various phosphogens (e.g. creatine phosphate). Creatine kinase isoenzymes play a central role in energy transduction in tissues with large, fluctuating energy demands, such as skeletal muscle, heart, brain and spermatozoa. In Squalus acanthias (Spiny dogfish), this protein is Creatine kinase B-type.